The following is a 218-amino-acid chain: Antifreeze protein Maxi (218 aa).

An N-terminal signal peptide occupies residues Met1–Ala23.

Belongs to the type-I AFP family. In terms of assembly, homodimer. In terms of tissue distribution, detected in blood serum (at protein level). Detected in liver.

The protein localises to the secreted. Its function is as follows. Contributes to protect fish blood from freezing at subzero sea water temperatures. Lowers the blood freezing point by about 1.1 degrees at a concentration of 0.1 mg/ml, and by about 1.5 degrees at a concentration of 0.2 mg/ml. Binds to nascent ice crystals and prevents further growth. This Pseudopleuronectes americanus (Winter flounder) protein is Antifreeze protein Maxi.